The following is a 73-amino-acid chain: Small ribosomal subunit protein bS18c (73 aa).

Belongs to the bacterial ribosomal protein bS18 family. Part of the 30S ribosomal subunit.

The protein localises to the plastid. It localises to the chloroplast. In Rhodomonas salina (Cryptomonas salina), this protein is Small ribosomal subunit protein bS18c.